The chain runs to 786 residues: m7GpppN-mRNA hydrolase dcap-2 (786 aa).

Residues 25-61 (QKQNKSTEEPPSSVQKLLASLQQAQNKSDLSEQPSTS) show a composition bias toward polar residues. Positions 25–148 (QKQNKSTEEP…QQQQQYKGPR (124 aa)) are disordered. A compositionally biased stretch (basic residues) spans 62–72 (KPKKNEKRKKA). 2 stretches are compositionally biased toward polar residues: residues 101 to 111 (MQQQAENARIS) and 118 to 133 (QVST…TAPE). The segment covering 134-144 (QQNYQQQQQQY) has biased composition (low complexity). Residues 238–366 (STVPTYGAIL…LPAYLQGNKF (129 aa)) form the Nudix hydrolase domain. The Nudix box signature appears at 273–294 (GKINQAEPPRDAAIRETFEETG). Glu-288 and Glu-292 together coordinate Mg(2+). 2 disordered regions span residues 556–576 (IMHS…TPTA) and 623–655 (ISST…SSQV). Composition is skewed to polar residues over residues 623 to 632 (ISSTQKQSIP) and 646 to 655 (SASLSGSSQV).

The protein belongs to the Nudix hydrolase family. DCP2 subfamily. As to quaternary structure, may be a component of the decapping complex composed of dcap-1 and dcap-2. Requires Mg(2+) as cofactor. Mn(2+) serves as cofactor. As to expression, expressed in sensory neurons.

It is found in the cytoplasmic granule. The protein localises to the cytoplasm. Its subcellular location is the perinuclear region. It catalyses the reaction a 5'-end (N(7)-methyl 5'-triphosphoguanosine)-ribonucleoside in mRNA + H2O = N(7)-methyl-GDP + a 5'-end phospho-ribonucleoside in mRNA + 2 H(+). It carries out the reaction a 5'-end (N(2),N(2),N(7)-trimethyl 5'-triphosphoguanosine)-ribonucleoside in mRNA + H2O = N(2),N(2),N(7)-trimethyl-GDP + a 5'-end phospho-ribonucleoside in mRNA + 2 H(+). Inhibited by capped and uncapped RNA. Not inhibited by dinucleotide cap or methylated nucleotide analogs. Decapping metalloenzyme that catalyzes the cleavage of the cap structure on mRNAs. Removes the 7-methyl guanine cap structure from mRNA molecules, yielding a 5'-phosphorylated mRNA fragment and 7m-GDP. RNA-decapping enzyme although it does not bind the RNA cap. May contribute to gene regulation in multiple RNA pathways including monomethylguanosine- and trimethylguanosine-capped RNAs. In oocytes, may play a role in the response to stress induced by heat shock, osmotic stress and anoxia. Required for the developmental axon guidance and regrowth of PLM touch receptor neurons. Early in embryogenesis, plays a role in ciliary shape formation in sensory neurons. Promotes survival at high temperatures. This chain is m7GpppN-mRNA hydrolase dcap-2, found in Caenorhabditis elegans.